The primary structure comprises 283 residues: Polyamine aminopropyltransferase (283 aa).

In terms of domain architecture, PABS spans 2–237 (ELWYTEEHTD…GHWLFGFASK (236 aa)). Q31 contacts S-methyl-5'-thioadenosine. Positions 62 and 86 each coordinate spermidine. S-methyl-5'-thioadenosine is bound by residues E106 and 137–138 (DG). The Proton acceptor role is filled by D155. 155 to 158 (DSTD) serves as a coordination point for spermidine. P162 is a binding site for S-methyl-5'-thioadenosine.

The protein belongs to the spermidine/spermine synthase family. In terms of assembly, homodimer or homotetramer.

It is found in the cytoplasm. It carries out the reaction S-adenosyl 3-(methylsulfanyl)propylamine + putrescine = S-methyl-5'-thioadenosine + spermidine + H(+). It participates in amine and polyamine biosynthesis; spermidine biosynthesis; spermidine from putrescine: step 1/1. Functionally, catalyzes the irreversible transfer of a propylamine group from the amino donor S-adenosylmethioninamine (decarboxy-AdoMet) to putrescine (1,4-diaminobutane) to yield spermidine. In Clostridium perfringens (strain ATCC 13124 / DSM 756 / JCM 1290 / NCIMB 6125 / NCTC 8237 / Type A), this protein is Polyamine aminopropyltransferase.